We begin with the raw amino-acid sequence, 276 residues long: MLPDRVLEILNEMKAERIRGATWLARKGAEAFLALAEELDEALLEDAIRELRSRIIEVNPSMASLYNLARFMPITNNRELVKMRALEFLRRMDEAKRELASIGAQLIDDGDVIITHSFSSSVLEIFKVAKDRRKSFKVIITESSPDYEGLHLANELENLGIEFEVITDSQMGLFCRKATISMVGADMVTRDGFVVNKAGTYLLALACHESDVPFYVAAETYKFHPTVKSNEVVLHERDFSRSGFRVRNVLFDLTPWKFIRGIITELGIVIPPRDIQ.

Belongs to the eIF-2B alpha/beta/delta subunits family. As to quaternary structure, complex of two different subunits.

Catalyzes the exchange of initiation factor 2-bound GDP for GTP. In Pyrococcus abyssi (strain GE5 / Orsay), this protein is Putative translation initiation factor eIF-2B subunit 2-like.